The sequence spans 302 residues: Sulfate adenylyltransferase subunit 2 (302 aa).

The segment at 280-302 (RQGRLIDSDQSASMEQKKRQGYF) is disordered.

Belongs to the PAPS reductase family. CysD subfamily. Heterodimer composed of CysD, the smaller subunit, and CysN.

It carries out the reaction sulfate + ATP + H(+) = adenosine 5'-phosphosulfate + diphosphate. The protein operates within sulfur metabolism; hydrogen sulfide biosynthesis; sulfite from sulfate: step 1/3. In terms of biological role, with CysN forms the ATP sulfurylase (ATPS) that catalyzes the adenylation of sulfate producing adenosine 5'-phosphosulfate (APS) and diphosphate, the first enzymatic step in sulfur assimilation pathway. APS synthesis involves the formation of a high-energy phosphoric-sulfuric acid anhydride bond driven by GTP hydrolysis by CysN coupled to ATP hydrolysis by CysD. The polypeptide is Sulfate adenylyltransferase subunit 2 (Shewanella baltica (strain OS195)).